We begin with the raw amino-acid sequence, 87 residues long: UPF0250 protein BUAPTUC7_482 (87 aa).

Belongs to the UPF0250 family.

The polypeptide is UPF0250 protein BUAPTUC7_482 (Buchnera aphidicola subsp. Acyrthosiphon pisum (strain Tuc7)).